The sequence spans 215 residues: Ubiquitin-conjugating enzyme E2 S (215 aa).

The region spanning 9 to 155 (DVIKRVVKEL…AKLFTSIHAS (147 aa)) is the UBC core domain. Cys93 functions as the Glycyl thioester intermediate in the catalytic mechanism. The segment at 159–215 (IDSNNNNENSTTTPTTTTTATTPSTNTASISSPVKKKTETTNSTTTKVQPKKSLKRL) is disordered. Over residues 161–190 (SNNNNENSTTTPTTTTTATTPSTNTASISS) the composition is skewed to low complexity.

It belongs to the ubiquitin-conjugating enzyme family.

The enzyme catalyses S-ubiquitinyl-[E1 ubiquitin-activating enzyme]-L-cysteine + [E2 ubiquitin-conjugating enzyme]-L-cysteine = [E1 ubiquitin-activating enzyme]-L-cysteine + S-ubiquitinyl-[E2 ubiquitin-conjugating enzyme]-L-cysteine.. It functions in the pathway protein modification; protein ubiquitination. Functionally, catalyzes the covalent attachment of ubiquitin to other proteins. Acts as an essential factor of the anaphase promoting complex/cyclosome (APC/C), a cell cycle-regulated ubiquitin ligase that controls progression through mitosis. Acts by specifically elongating polyubiquitin chains initiated by the E2 enzyme ubch10 on APC/C substrates, enhancing the degradation of APC/C substrates by the proteasome and promoting mitotic exit. The sequence is that of Ubiquitin-conjugating enzyme E2 S (ube2s) from Dictyostelium discoideum (Social amoeba).